A 70-amino-acid polypeptide reads, in one-letter code: MQGVQEQIEELQTKLAFQELTVEELNQEVIKLNQLVAHQQHQIQLLIGKLQAIEPSNMATQAEETPPPHY.

Belongs to the SlyX family.

This chain is Protein SlyX homolog, found in Shewanella oneidensis (strain ATCC 700550 / JCM 31522 / CIP 106686 / LMG 19005 / NCIMB 14063 / MR-1).